Consider the following 258-residue polypeptide: tRNA (guanine-N(7)-)-methyltransferase (258 aa).

The segment at 1–42 is disordered; sequence MPETPLMRDNGPVNHADQDAPAVPEEGQTKDSKGSRLHPRVT. Residues E90, E115, D142, and D165 each coordinate S-adenosyl-L-methionine. Residue D165 is part of the active site. Substrate is bound by residues K169, D201, and 235 to 238; that span reads TKFE.

The protein belongs to the class I-like SAM-binding methyltransferase superfamily. TrmB family.

It carries out the reaction guanosine(46) in tRNA + S-adenosyl-L-methionine = N(7)-methylguanosine(46) in tRNA + S-adenosyl-L-homocysteine. It participates in tRNA modification; N(7)-methylguanine-tRNA biosynthesis. Functionally, catalyzes the formation of N(7)-methylguanine at position 46 (m7G46) in tRNA. The polypeptide is tRNA (guanine-N(7)-)-methyltransferase (Rhodococcus jostii (strain RHA1)).